A 429-amino-acid chain; its full sequence is Hemoglobinase (429 aa).

A signal peptide spans 1–19 (MMLFSLFLISILHILLVKC). The propeptide occupies 20-31 (QLDTNYEVSDET). Histidine 151 is a catalytic residue. Residues 288–309 (FQGSRDKSSSENDEPPMKPRHS) form a disordered region. The propeptide occupies 292 to 429 (RDKSSSENDE…INEAIIKICG (138 aa)).

It belongs to the peptidase C13 family.

The catalysed reaction is Hydrolysis of proteins and small molecule substrates at -Asn-|-Xaa- bonds.. This protease is used by the parasite for degradation of the host globin. In Schistosoma mansoni (Blood fluke), this protein is Hemoglobinase.